The chain runs to 211 residues: Large ribosomal subunit protein uL3 (211 aa).

An N5-methylglutamine modification is found at glutamine 151.

It belongs to the universal ribosomal protein uL3 family. Part of the 50S ribosomal subunit. Forms a cluster with proteins L14 and L19. In terms of processing, methylated by PrmB.

In terms of biological role, one of the primary rRNA binding proteins, it binds directly near the 3'-end of the 23S rRNA, where it nucleates assembly of the 50S subunit. The sequence is that of Large ribosomal subunit protein uL3 from Francisella tularensis subsp. tularensis (strain FSC 198).